The following is a 376-amino-acid chain: Actin, cytoplasmic (376 aa).

This sequence belongs to the actin family.

It is found in the cytoplasm. The protein resides in the cytoskeleton. The enzyme catalyses ATP + H2O = ADP + phosphate + H(+). Functionally, actins are highly conserved proteins that are involved in various types of cell motility and are ubiquitously expressed in all eukaryotic cells. The sequence is that of Actin, cytoplasmic from Tetrahymena pyriformis.